Here is a 226-residue protein sequence, read N- to C-terminus: Cobalt transport protein CbiM 1 (226 aa).

A run of 6 helical transmembrane segments spans residues Gly-6–Tyr-26, Met-43–Val-63, Leu-75–Phe-95, Thr-107–Phe-127, Phe-135–Thr-155, and Val-181–Met-201.

The protein belongs to the CbiM family. Forms an energy-coupling factor (ECF) transporter complex composed of an ATP-binding protein (A component, CbiO), a transmembrane protein (T component, CbiQ) and 2 possible substrate-capture proteins (S components, CbiM and CbiN) of unknown stoichimetry.

It localises to the cell inner membrane. It participates in cofactor biosynthesis; adenosylcobalamin biosynthesis. Functionally, part of the energy-coupling factor (ECF) transporter complex CbiMNOQ involved in cobalt import. This Pelobacter propionicus (strain DSM 2379 / NBRC 103807 / OttBd1) protein is Cobalt transport protein CbiM 1 (cbim1).